Consider the following 756-residue polypeptide: Alpha-1,2-mannosyltransferase MNN26 (756 aa).

Over methionine 1 to histidine 10 the chain is Cytoplasmic. A helical membrane pass occupies residues leucine 11–threonine 31. Topologically, residues histidine 32 to serine 756 are extracellular. Polar residues predominate over residues leucine 723–isoleucine 734. The tract at residues leucine 723 to serine 756 is disordered.

This sequence belongs to the MNN1/MNT family.

It localises to the golgi apparatus membrane. It functions in the pathway protein modification; protein glycosylation. Its function is as follows. Alpha-1,2-mannosyltransferase required for cell wall integrity. Responsible for addition of the first alpha-1,2-linked mannose to form the branches on the mannan backbone of oligosaccharides. Addition of alpha-1,2-mannose is required for stabilization of the alpha-1,6-mannose backbone and hence regulates mannan fibril length; and is important for both immune recognition and virulence. The chain is Alpha-1,2-mannosyltransferase MNN26 (MNN26) from Candida albicans (strain SC5314 / ATCC MYA-2876) (Yeast).